The sequence spans 2168 residues: Genome polyprotein (2168 aa).

Positions 1–20 (MGMQMSKNTAGSHTTVTQAS) are disordered. Gly2 is lipidated: N-myristoyl glycine; by host. The Cytoplasmic segment spans residues 2–1479 (GMQMSKNTAG…NVSIATTILS (1478 aa)). Amphipathic alpha-helix stretches follow at residues 551–567 (ALQAPVETALNSAISSV) and 554–575 (APVETALNSAISSVIAGITAQD). The span at 576–589 (TQPSSHNISTSETP) shows a compositional bias: polar residues. Residues 576–607 (TQPSSHNISTSETPALQAAETGASSNASDEGM) are disordered. Active-site for protease 2A activity residues include His856 and Asp874. Cys891 and Cys893 together coordinate Zn(2+). Cys945 serves as the catalytic For protease 2A activity. Positions 951 and 953 each coordinate Zn(2+). Residues 1085-1157 (GDDWLKKFTS…EHSCPTTEQQ (73 aa)) form a membrane-binding region. Residues 1085–1223 (GDDWLKKFTS…TAGTGKSLAT (139 aa)) are oligomerization. The tract at residues 1106–1110 (AEKIM) is RNA-binding. The region spanning 1189-1347 (EKRILGYIQF…YKTHNGTLDV (159 aa)) is the SF3 helicase domain. Zn(2+) is bound by residues Cys1354, Cys1365, and Cys1370. The segment at 1354 to 1370 (CEDCCPANFKTCMPLIC) adopts a C4-type; degenerate zinc-finger fold. An RNA-binding region spans residues 1397–1404 (EWKRRNQV). Positions 1408 to 1413 (YVRLFQ) are oligomerization. Residues 1480–1495 (SLVLLTSVITLVYLVY) lie within the membrane without spanning it. The Cytoplasmic portion of the chain corresponds to 1496 to 2168 (RLFAGYQGPY…SLLREWYEKF (673 aa)). Tyr1505 is modified (O-(5'-phospho-RNA)-tyrosine). Residues 1525-1703 (GPLMDFGVGM…FCAALKRSYF (179 aa)) form the Peptidase C3 domain. Residues His1564, Glu1595, and Cys1671 each act as for protease 3C activity in the active site. The region spanning 1934 to 2048 (GELFGFDYTA…ASYPYRIDPA (115 aa)) is the RdRp catalytic domain. Asp1940 and Asp2035 together coordinate Mg(2+).

This sequence belongs to the picornaviruses polyprotein family. In terms of assembly, interacts with capsid protein VP1 and capsid protein VP3 to form heterotrimeric protomers. Interacts with capsid protein VP0, and capsid protein VP3 to form heterotrimeric protomers. Five protomers subsequently associate to form pentamers which serve as building blocks for the capsid. Interacts with capsid protein VP2, capsid protein VP3 and capsid protein VP4 following cleavage of capsid protein VP0. As to quaternary structure, interacts with capsid protein VP1 and capsid protein VP3 in the mature capsid. In terms of assembly, interacts with capsid protein VP0 and capsid protein VP1 to form heterotrimeric protomers. Five protomers subsequently associate to form pentamers which serve as building blocks for the capsid. Interacts with capsid protein VP4 in the mature capsid. Interacts with protein 2C; this interaction may be important for virion morphogenesis. Interacts with capsid protein VP1 and capsid protein VP3. As to quaternary structure, homodimer. In terms of assembly, homohexamer; forms a hexameric ring structure with 6-fold symmetry characteristic of AAA+ ATPases. Interacts (via N-terminus) with host RTN3 (via reticulon domain); this interaction is important for viral replication. Interacts with capsid protein VP3; this interaction may be important for virion morphogenesis. Interacts with protein 3CD. As to quaternary structure, homodimer. Interacts with host GBF1. Interacts (via GOLD domain) with host ACBD3 (via GOLD domain); this interaction allows the formation of a viral protein 3A/ACBD3 heterotetramer with a 2:2 stoichiometry, which will stimulate the recruitment of host PI4KB in order to synthesize PI4P at the viral RNA replication sites. In terms of assembly, interacts with RNA-directed RNA polymerase. Interacts with protein 3AB and with RNA-directed RNA polymerase. As to quaternary structure, interacts with Viral protein genome-linked and with protein 3CD. Mg(2+) serves as cofactor. In terms of processing, specific enzymatic cleavages in vivo by the viral proteases yield processing intermediates and the mature proteins. Post-translationally, myristoylation is required for the formation of pentamers during virus assembly. Further assembly of 12 pentamers and a molecule of genomic RNA generates the provirion. During virion maturation, immature virions are rendered infectious following cleavage of VP0 into VP4 and VP2. This maturation seems to be an autocatalytic event triggered by the presence of RNA in the capsid and it is followed by a conformational change infectious virion. In terms of processing, myristoylation is required during RNA encapsidation and formation of the mature virus particle. Post-translationally, VPg is uridylylated by the polymerase into VPg-pUpU. This acts as a nucleotide-peptide primer for the genomic RNA replication.

The protein resides in the virion. The protein localises to the host cytoplasm. It is found in the host cytoplasmic vesicle membrane. Its subcellular location is the host nucleus. The enzyme catalyses a ribonucleoside 5'-triphosphate + H2O = a ribonucleoside 5'-diphosphate + phosphate + H(+). It carries out the reaction Selective cleavage of Tyr-|-Gly bond in the picornavirus polyprotein.. It catalyses the reaction RNA(n) + a ribonucleoside 5'-triphosphate = RNA(n+1) + diphosphate. The catalysed reaction is Selective cleavage of Gln-|-Gly bond in the poliovirus polyprotein. In other picornavirus reactions Glu may be substituted for Gln, and Ser or Thr for Gly.. Its activity is regulated as follows. Replication or transcription is subject to high level of random mutations by the nucleotide analog ribavirin. Its function is as follows. Forms an icosahedral capsid of pseudo T=3 symmetry with capsid proteins VP2 and VP3. The capsid is 300 Angstroms in diameter, composed of 60 copies of each capsid protein and enclosing the viral positive strand RNA genome. Capsid protein VP1 mainly forms the vertices of the capsid. Capsid protein VP1 interacts with host cell receptor to provide virion attachment to target host cells. This attachment induces virion internalization. Tyrosine kinases are probably involved in the entry process. After binding to its receptor, the capsid undergoes conformational changes. Capsid protein VP1 N-terminus (that contains an amphipathic alpha-helix) and capsid protein VP4 are externalized. Together, they shape a pore in the host membrane through which viral genome is translocated to host cell cytoplasm. Forms an icosahedral capsid of pseudo T=3 symmetry with capsid proteins VP2 and VP3. The capsid is 300 Angstroms in diameter, composed of 60 copies of each capsid protein and enclosing the viral positive strand RNA genome. Functionally, lies on the inner surface of the capsid shell. After binding to the host receptor, the capsid undergoes conformational changes. Capsid protein VP4 is released, Capsid protein VP1 N-terminus is externalized, and together, they shape a pore in the host membrane through which the viral genome is translocated into the host cell cytoplasm. In terms of biological role, component of immature procapsids, which is cleaved into capsid proteins VP4 and VP2 after maturation. Allows the capsid to remain inactive before the maturation step. Its function is as follows. Cysteine protease that cleaves viral polyprotein and specific host proteins. It is responsible for the autocatalytic cleavage between the P1 and P2 regions, which is the first cleavage occurring in the polyprotein. Also cleaves the host translation initiation factor EIF4G1, in order to shut down the capped cellular mRNA translation. Inhibits the host nucleus-cytoplasm protein and RNA trafficking by cleaving host members of the nuclear pores. Counteracts stress granule formation probably by antagonizing its assembly or promoting its dissassembly. Plays an essential role in the virus replication cycle by acting as a viroporin. Creates a pore in the host endoplasmic reticulum and as a consequence releases Ca2+ in the cytoplasm of infected cell. In turn, high levels of cytoplasmic calcium may trigger membrane trafficking and transport of viral ER-associated proteins to viroplasms, sites of viral genome replication. Functionally, induces and associates with structural rearrangements of intracellular membranes. Displays RNA-binding, nucleotide binding and NTPase activities. May play a role in virion morphogenesis and viral RNA encapsidation by interacting with the capsid protein VP3. In terms of biological role, localizes the viral replication complex to the surface of membranous vesicles. Together with protein 3CD binds the Cis-Active RNA Element (CRE) which is involved in RNA synthesis initiation. Acts as a cofactor to stimulate the activity of 3D polymerase, maybe through a nucleid acid chaperone activity. Its function is as follows. Localizes the viral replication complex to the surface of membranous vesicles. It inhibits host cell endoplasmic reticulum-to-Golgi apparatus transport and causes the disassembly of the Golgi complex, possibly through GBF1 interaction. This would result in depletion of MHC, trail receptors and IFN receptors at the host cell surface. Plays an essential role in viral RNA replication by recruiting ACBD3 and PI4KB at the viral replication sites, thereby allowing the formation of the rearranged membranous structures where viral replication takes place. Acts as a primer for viral RNA replication and remains covalently bound to viral genomic RNA. VPg is uridylylated prior to priming replication into VPg-pUpU. The oriI viral genomic sequence may act as a template for this. The VPg-pUpU is then used as primer on the genomic RNA poly(A) by the RNA-dependent RNA polymerase to replicate the viral genome. During genome replication, the VPg-RNA linkage is removed by the host TDP2, thereby accelerating replication. During the late stage of the replication cycle, host TDP2 is excluded from sites of viral RNA synthesis and encapsidation, allowing for the generation of progeny virions. Functionally, involved in the viral replication complex and viral polypeptide maturation. It exhibits protease activity with a specificity and catalytic efficiency that is different from protease 3C. Protein 3CD lacks polymerase activity. Protein 3CD binds to the 5'UTR of the viral genome. In terms of biological role, replicates the viral genomic RNA on the surface of intracellular membranes. May form linear arrays of subunits that propagate along a strong head-to-tail interaction called interface-I. Covalently attaches UMP to a tyrosine of VPg, which is used to prime RNA synthesis. The positive stranded RNA genome is first replicated at virus induced membranous vesicles, creating a dsRNA genomic replication form. This dsRNA is then used as template to synthesize positive stranded RNA genomes. ss(+)RNA genomes are either translated, replicated or encapsidated. Its function is as follows. Major viral protease that mediates proteolytic processing of the polyprotein. Cleaves host EIF5B, contributing to host translation shutoff. Also cleaves host PABPC1, contributing to host translation shutoff. Cleaves host NLRP1, triggers host N-glycine-mediated degradation of the autoinhibitory NLRP1 N-terminal fragment. This is Genome polyprotein from Sus scrofa (Pig).